Consider the following 918-residue polypeptide: Interleukin-6 receptor subunit beta (918 aa).

The N-terminal stretch at 1–22 (MSALRIWLMQALLIFLTTESIG) is a signal peptide. Topologically, residues 23-618 (QLVEPCGYIY…TLKFAQGEIE (596 aa)) are extracellular. The 95-residue stretch at 26-120 (EPCGYIYPEF…IEQNVYGITI (95 aa)) folds into the Ig-like C2-type domain. Intrachain disulfides connect C28–C54 and C48–C103. Residues N43, N61, N83, and N131 are each glycosylated (N-linked (GlcNAc...) asparagine). 5 consecutive Fibronectin type-III domains span residues 125–215 (PPDI…NFDP), 223–323 (PPHN…TYED), 328–418 (APSF…IPGS), 422–516 (ASHP…LKQA), and 518–612 (PSKG…TLKF). C134 and C144 are disulfide-bonded. N-linked (GlcNAc...) asparagine glycosylation is present at N157. A disulfide bridge connects residues C172 and C181. N-linked (GlcNAc...) asparagine glycans are attached at residues N205 and N226. The WSXWS motif motif lies at 309–313 (WSDWS). N-linked (GlcNAc...) asparagine glycans are attached at residues N382 and N389. Residues C457 and C465 are joined by a disulfide bond. Residues N477 and N552 are each glycosylated (N-linked (GlcNAc...) asparagine). Residues 619–640 (AIVVPVCLAFLLTTLLGVLFCF) form a helical membrane-spanning segment. The Cytoplasmic segment spans residues 641–918 (NKRDLIKKHI…TVRQGGYMPQ (278 aa)). A Box 1 motif motif is present at residues 650–658 (IWPNVPDPS). Disordered stretches follow at residues 659–679 (KSHI…NSKD), 720–754 (TEGH…STAS), 773–795 (VQVF…PEDL), and 817–842 (SCSQ…GSEE). Phosphoserine is present on residues S660 and S666. Positions 730 to 751 (SSCMSSSRPSISSSEENESAQS) are enriched in low complexity. Over residues 773–785 (VQVFSRSESTQPL) the composition is skewed to polar residues. Residues S781, S788, S828, and S838 each carry the phosphoserine modification.

It belongs to the type I cytokine receptor family. Type 2 subfamily. In terms of assembly, component of a hexamer of two molecules each of IL6, IL6R and IL6ST; associates with the complex IL6:IL6R but does not interact with IL6. Forms heterodimers composed of LIFR and IL6ST (type I OSM receptor) which are activated by LIF and OSM. Also forms heterodimers composed of OSMR and IL6ST (type II receptor) which are activated by OSM but not by LIF. Interacts with HCK. Interacts with INPP5D/SHIP1. Interacts with SRC and YES. Interacts with ARMH4; this interaction prevents IL6ST protein homodimerization and bridges ARMH4 with IL6R and STAT3 and therefore inhibits phosphorylation of STAT3 at 'Tyr-705'. Phosphorylation of Ser-781 down-regulates cell surface expression. In terms of processing, heavily N-glycosylated. Glycosylation is required for protein stability and localization in plasma membrane but not for ligand binding. Found in hepatocytes, astrocytes, fibroblasts and endothelial cells.

The protein resides in the cell membrane. Functionally, signal-transducing molecule. The receptor systems for IL6, LIF, OSM, CNTF, IL11, CTF1 and BSF3 can utilize IL6ST for initiating signal transmission. Binding of IL6 to IL6R induces IL6ST homodimerization and formation of a high-affinity receptor complex, which activates the intracellular JAK-MAPK and JAK-STAT3 signaling pathways. That causes phosphorylation of IL6ST tyrosine residues which in turn activates STAT3. In parallel, the IL6 signaling pathway induces the expression of two cytokine receptor signaling inhibitors, SOCS1 and SOCS3, which inhibit JAK and terminate the activity of the IL6 signaling pathway as a negative feedback loop. Also activates the yes-associated protein 1 (YAP) and NOTCH pathways to control inflammation-induced epithelial regeneration, independently of STAT3. Mediates signals which regulate immune response, hematopoiesis, pain control and bone metabolism. Has a role in embryonic development. Essential for survival of motor and sensory neurons and for differentiation of astrocytes. Required for expression of TRPA1 in nociceptive neurons. Required for the maintenance of PTH1R expression in the osteoblast lineage and for the stimulation of PTH-induced osteoblast differentiation. Required for normal trabecular bone mass and cortical bone composition. The sequence is that of Interleukin-6 receptor subunit beta from Rattus norvegicus (Rat).